A 31-amino-acid polypeptide reads, in one-letter code: Dermaseptin-7.1TR (31 aa).

At Gln-31 the chain carries Glutamine amide.

Expressed by the skin glands.

It localises to the secreted. Has antimicrobial activity. The sequence is that of Dermaseptin-7.1TR from Phyllomedusa trinitatis (Trinidad leaf frog).